The sequence spans 80 residues: NAD(P)H-quinone oxidoreductase subunit O (80 aa).

Belongs to the complex I NdhO subunit family. NDH-1 can be composed of about 15 different subunits; different subcomplexes with different compositions have been identified which probably have different functions.

The protein localises to the cellular thylakoid membrane. The enzyme catalyses a plastoquinone + NADH + (n+1) H(+)(in) = a plastoquinol + NAD(+) + n H(+)(out). The catalysed reaction is a plastoquinone + NADPH + (n+1) H(+)(in) = a plastoquinol + NADP(+) + n H(+)(out). Its function is as follows. NDH-1 shuttles electrons from an unknown electron donor, via FMN and iron-sulfur (Fe-S) centers, to quinones in the respiratory and/or the photosynthetic chain. The immediate electron acceptor for the enzyme in this species is believed to be plastoquinone. Couples the redox reaction to proton translocation, and thus conserves the redox energy in a proton gradient. Cyanobacterial NDH-1 also plays a role in inorganic carbon-concentration. The protein is NAD(P)H-quinone oxidoreductase subunit O of Prochlorococcus marinus subsp. pastoris (strain CCMP1986 / NIES-2087 / MED4).